The chain runs to 233 residues: Pyridoxal phosphate homeostasis protein (233 aa).

Residue Lys36 is modified to N6-(pyridoxal phosphate)lysine.

The protein belongs to the pyridoxal phosphate-binding protein YggS/PROSC family.

In terms of biological role, pyridoxal 5'-phosphate (PLP)-binding protein, which is involved in PLP homeostasis. The sequence is that of Pyridoxal phosphate homeostasis protein from Vibrio alginolyticus.